The chain runs to 294 residues: 4-hydroxy-tetrahydrodipicolinate synthase (294 aa).

Threonine 46 serves as a coordination point for pyruvate. Tyrosine 134 functions as the Proton donor/acceptor in the catalytic mechanism. The active-site Schiff-base intermediate with substrate is lysine 163. Isoleucine 205 lines the pyruvate pocket.

It belongs to the DapA family. In terms of assembly, homotetramer; dimer of dimers.

The protein localises to the cytoplasm. It catalyses the reaction L-aspartate 4-semialdehyde + pyruvate = (2S,4S)-4-hydroxy-2,3,4,5-tetrahydrodipicolinate + H2O + H(+). Its pathway is amino-acid biosynthesis; L-lysine biosynthesis via DAP pathway; (S)-tetrahydrodipicolinate from L-aspartate: step 3/4. In terms of biological role, catalyzes the condensation of (S)-aspartate-beta-semialdehyde [(S)-ASA] and pyruvate to 4-hydroxy-tetrahydrodipicolinate (HTPA). The chain is 4-hydroxy-tetrahydrodipicolinate synthase from Clostridium tetani (strain Massachusetts / E88).